Consider the following 350-residue polypeptide: tRNA pseudouridine synthase D (350 aa).

Asp85 acts as the Nucleophile in catalysis. The TRUD domain maps to 160-310 (GVINYFGEQR…EAARRTILLR (151 aa)).

Belongs to the pseudouridine synthase TruD family.

It carries out the reaction uridine(13) in tRNA = pseudouridine(13) in tRNA. Responsible for synthesis of pseudouridine from uracil-13 in transfer RNAs. The chain is tRNA pseudouridine synthase D from Idiomarina loihiensis (strain ATCC BAA-735 / DSM 15497 / L2-TR).